A 635-amino-acid polypeptide reads, in one-letter code: MITVRLPDGSQREFDTPVTVAQVAANIGTGLAKAALAGKVNGDVVDTSYLIEKDSDLAIITDKDAEGIDVIRHSTAHLLAYAVKELFPDAQVTIGPVIDNGFYYDFSYKRPFTPEDLVAIEKKMTELAKKDEPVTRKVMPRDEAVAYFKSIGEAYKAEIIESIPADQEVSLYTEGKFTDLCRGPHVPSTGKLKVFKLMKLAGAYWRGDSKNEMLQRIYGTAWAKKEEQEAYLHMLEEAEKRDHRKLGKQLDFFHFQEEAPGLIFWHPKGWSIWQQVEQYMRKVYQDNDYQEVKAPQILDRGLWEKTGHWDNYRENMFVTESENRSYALKPMNCPGHVQIYNSDMRSYRDLPLRYGEFGQCHRNEPSGALHGMMRVRGFTQDDGHIFCTEEQIAEEVTAFHAQAMAVYAAFGFENIDVKLALRPDSRIGTEESWDIAEESLRSALRACGVSWTELPGEGAFYGPKIEYHLKDSLGRAWQVGTVQIDPSMPGRLGAEYVAVDNTRKTPIMLHRAIVGSLERFIGILIEHYAGALPLWLAPVQIAVLNISDAQAEYAQAVAQNLKKQGFRVHLDLRNEKITYKIREHSVQKLPYIIVIGDKERDAGTVAVRARGNVDLGVMPVDLLVDRLNSEIDAKA.

One can recognise a TGS domain in the interval 1–61; it reads MITVRLPDGS…EKDSDLAIIT (61 aa). The segment at 242-533 is catalytic; that stretch reads DHRKLGKQLD…LIEHYAGALP (292 aa). Residues C333, H384, and H510 each coordinate Zn(2+).

It belongs to the class-II aminoacyl-tRNA synthetase family. Homodimer. It depends on Zn(2+) as a cofactor.

It localises to the cytoplasm. The catalysed reaction is tRNA(Thr) + L-threonine + ATP = L-threonyl-tRNA(Thr) + AMP + diphosphate + H(+). Catalyzes the attachment of threonine to tRNA(Thr) in a two-step reaction: L-threonine is first activated by ATP to form Thr-AMP and then transferred to the acceptor end of tRNA(Thr). Also edits incorrectly charged L-seryl-tRNA(Thr). This Janthinobacterium sp. (strain Marseille) (Minibacterium massiliensis) protein is Threonine--tRNA ligase.